The primary structure comprises 103 residues: Small ribosomal subunit protein uS10 (103 aa).

This sequence belongs to the universal ribosomal protein uS10 family. As to quaternary structure, part of the 30S ribosomal subunit.

In terms of biological role, involved in the binding of tRNA to the ribosomes. In Alteromonas mediterranea (strain DSM 17117 / CIP 110805 / LMG 28347 / Deep ecotype), this protein is Small ribosomal subunit protein uS10.